Reading from the N-terminus, the 164-residue chain is V-type proton ATPase subunit c' (164 aa).

The Vacuolar portion of the chain corresponds to 1–14 (MSTQLASNIYAPLY). The chain crosses the membrane as a helical span at residues 15 to 37 (APFFGFAGCAAAMVLSCLGAAIG). Residues 38 to 59 (TAKSGIGIAGIGTFKPELIMKS) are Cytoplasmic-facing. A helical transmembrane segment spans residues 60–80 (LIPVVMSGILAIYGLVVAVLI). Residues 81–98 (AGNLSPTEDYTLFNGFMH) are Vacuolar-facing. A helical transmembrane segment spans residues 99–120 (LSCGLCVGFACLSSGYAIGMVG). Residues 121 to 132 (DVGVRKYMHQPR) lie on the Cytoplasmic side of the membrane. Residues 133–158 (LFVGIVLILIFSEVLGLYGMIVALIL) traverse the membrane as a helical segment. The Vacuolar segment spans residues 159-164 (NTRGSE).

This sequence belongs to the V-ATPase proteolipid subunit family. As to quaternary structure, V-ATPase is a heteromultimeric enzyme composed of a peripheral catalytic V1 complex (components A to H) attached to an integral membrane V0 proton pore complex (components: a, c, c', c'', d, e, f and VOA1). The decameric c-ring forms the proton-conducting pore, and is composed of eight proteolipid subunits c, one subunit c' and one subunit c''.

The protein localises to the vacuole membrane. Functionally, proton-conducting pore forming subunit of the V0 complex of vacuolar(H+)-ATPase (V-ATPase), a multisubunit enzyme composed of a peripheral complex (V1) that hydrolyzes ATP and a membrane integral complex (V0) that translocates protons. V-ATPase is responsible for acidifying and maintaining the pH of intracellular compartments. The protein is V-type proton ATPase subunit c' (VMA11) of Saccharomyces cerevisiae (strain ATCC 204508 / S288c) (Baker's yeast).